A 428-amino-acid polypeptide reads, in one-letter code: C4-dicarboxylate transport protein (428 aa).

9 helical membrane-spanning segments follow: residues 4-24 (SLFK…ILLG), 44-64 (LIKM…IAGM), 76-96 (VALL…LIIV), 142-162 (IGAF…MFGF), 184-204 (VIFG…FGAM), 222-242 (LIVC…GSIA), 289-309 (VVGL…SIYL), 326-346 (IFHQ…AAGV), and 352-372 (IVLA…LALI).

This sequence belongs to the dicarboxylate/amino acid:cation symporter (DAACS) (TC 2.A.23) family.

The protein resides in the cell inner membrane. In terms of biological role, responsible for the transport of dicarboxylates such as succinate, fumarate, and malate from the periplasm across the membrane. This chain is C4-dicarboxylate transport protein, found in Citrobacter koseri (strain ATCC BAA-895 / CDC 4225-83 / SGSC4696).